A 574-amino-acid chain; its full sequence is Sulfate adenylyltransferase (574 aa).

The segment at 1–169 is N-terminal; it reads MANTPHGGVL…IEAVNKLNHY (169 aa). Residues 170-394 form a catalytic region; that stretch reads DYVALRYTPA…LRESNPPRAS (225 aa). Q197 lines the sulfate pocket. ATP is bound by residues 197-200 and 291-294; these read QTRN and GRDH. Catalysis depends on residues T198, R199, and N200. Residue R199 coordinates sulfate. Sulfate is bound at residue A295. ATP is bound at residue V333. Residues 395 to 574 form an allosteric regulation domain; adenylyl-sulfate kinase-like region; the sequence is QGFTIFLTGY…LESEGYFERL (180 aa). Residues 434–437, R451, 477–478, and R516 each bind 3'-phosphoadenylyl sulfate; these read DTVR and IA.

It in the N-terminal section; belongs to the sulfate adenylyltransferase family. In the C-terminal section; belongs to the APS kinase family. Homohexamer. Dimer of trimers.

The protein resides in the cytoplasm. The enzyme catalyses sulfate + ATP + H(+) = adenosine 5'-phosphosulfate + diphosphate. Its pathway is sulfur metabolism; hydrogen sulfide biosynthesis; sulfite from sulfate: step 1/3. With respect to regulation, allosterically inhibited by 3'-phosphoadenosine 5'-phosphosulfate (PAPS). Its function is as follows. Catalyzes the first intracellular reaction of sulfate assimilation, forming adenosine-5'-phosphosulfate (APS) from inorganic sulfate and ATP. Plays an important role in sulfate activation as a component of the biosynthesis pathway of sulfur-containing amino acids. In Aspergillus niger, this protein is Sulfate adenylyltransferase.